The primary structure comprises 504 residues: Protein psiD (504 aa).

The first 21 residues, 1–21 (MKYSYLLLILLLSNLYKEGFS), serve as a signal peptide directing secretion. 6 N-linked (GlcNAc...) asparagine glycosylation sites follow: Asn-87, Asn-136, Asn-236, Asn-252, Asn-290, and Asn-373. Positions 111–251 (LTRVGDSTYA…YDACGVCDGH (141 aa)) constitute a PA14 domain. Residues 417–430 (TVTPTVTPTVTPTP) are compositionally biased toward low complexity. A disordered region spans residues 417-453 (TVTPTVTPTVTPTPTTTPTPSPTTVPPRPTPTPLPAD). The span at 431–453 (TTTPTPSPTTVPPRPTPTPLPAD) shows a compositional bias: pro residues. A glycan (N-linked (GlcNAc...) asparagine) is linked at Asn-483.

The protein belongs to the prespore-cell-inducing factor family.

It is found in the secreted. This Dictyostelium discoideum (Social amoeba) protein is Protein psiD (psiD).